We begin with the raw amino-acid sequence, 381 residues long: Acetylornithine deacetylase (381 aa).

A Zn(2+)-binding site is contributed by histidine 78. Residue aspartate 80 is part of the active site. Aspartate 110 serves as a coordination point for Zn(2+). Residue glutamate 142 is part of the active site. The Zn(2+) site is built by glutamate 143, glutamate 167, and histidine 353.

It belongs to the peptidase M20A family. ArgE subfamily. As to quaternary structure, homodimer. Requires Zn(2+) as cofactor. The cofactor is Co(2+). Glutathione is required as a cofactor.

The protein localises to the cytoplasm. The catalysed reaction is N(2)-acetyl-L-ornithine + H2O = L-ornithine + acetate. Its pathway is amino-acid biosynthesis; L-arginine biosynthesis; L-ornithine from N(2)-acetyl-L-ornithine (linear): step 1/1. In terms of biological role, catalyzes the hydrolysis of the amide bond of N(2)-acetylated L-amino acids. Cleaves the acetyl group from N-acetyl-L-ornithine to form L-ornithine, an intermediate in L-arginine biosynthesis pathway, and a branchpoint in the synthesis of polyamines. The protein is Acetylornithine deacetylase of Moritella profunda.